A 446-amino-acid chain; its full sequence is MEYAVSVESFLSSLQRHNPHQPEYLQAVREVFTSLWPFIERNPAYREQALLERLVEPERIIQFRVSWVDDRGQVQVNRAFRVQFNSAIGPYKGGMRFHPSVNLSILKFLGFEQTFKNALTTLPMGGGKGGSDFDPKGKSQGRIMRFCQALMTELYRHLGPDTDVPAGDIGDGGREVGFMAGMMKKLSNNTACVFTGKGLSFGGSLIRPEATGYGLVYFTDAMLQRHGLGFEGMRVAVSGSGNVAQYTIEKALELDARVITVSDSGGTLVDEDGFTTEKLAHLAEIKNQRYGRVADYAAERGLTYLAGQQPWNVPVDIALPCATQNELDLEAARVIRNGVKAVAEGANMPTTIQATDAFLDAGVLFAPGKAANAAGLATSGLEMAQNAARIGWRAEKVDVRLQHIMADIHHACVEYGGEGKQTHYVHGANIAGFVKVAEAMLAQGVL.

Substrate is bound by residues Lys-92, Gln-113, and Lys-116. Lys-128 acts as the Proton donor in catalysis. Gly-167 contacts substrate. Residues Thr-211 and Asn-242 each coordinate NADP(+). Residue Ser-379 coordinates substrate.

Belongs to the Glu/Leu/Phe/Val dehydrogenases family. In terms of assembly, homohexamer.

The enzyme catalyses L-glutamate + NADP(+) + H2O = 2-oxoglutarate + NH4(+) + NADPH + H(+). Functionally, catalyzes the reversible oxidative deamination of glutamate to a-ketoglutarate and ammonia. The protein is NADP-specific glutamate dehydrogenase (gdhA) of Unknown prokaryotic organism.